Reading from the N-terminus, the 372-residue chain is MADS-box transcription factor pvg4 (372 aa).

The region spanning 1 to 61 (MGRKKISIAP…GRLHVFCSSD (61 aa)) is the MADS-box domain. The interval 81–187 (SHFSSSPVEE…HPPHPHFHNN (107 aa)) is disordered. A compositionally biased stretch (low complexity) spans 84–100 (SSSPVEESSTVSPETTT). The segment covering 114–145 (QDQPLSDSQLDTGDSPATSETTVQDYNPQVQS) has biased composition (polar residues). Over residues 167–184 (QHHHPHTRPPHHPPHPHF) the composition is skewed to basic residues.

The protein resides in the nucleus. Its function is as follows. Acts in transcription regulation. May bind to a MEF2-like typee II promoter sequence. This is MADS-box transcription factor pvg4 (pvg4) from Schizosaccharomyces pombe (strain 972 / ATCC 24843) (Fission yeast).